The following is a 440-amino-acid chain: UDP-N-acetylmuramoylalanine--D-glutamate ligase (440 aa).

115 to 121 lines the ATP pocket; the sequence is GSNGKST.

The protein belongs to the MurCDEF family.

Its subcellular location is the cytoplasm. The catalysed reaction is UDP-N-acetyl-alpha-D-muramoyl-L-alanine + D-glutamate + ATP = UDP-N-acetyl-alpha-D-muramoyl-L-alanyl-D-glutamate + ADP + phosphate + H(+). Its pathway is cell wall biogenesis; peptidoglycan biosynthesis. Cell wall formation. Catalyzes the addition of glutamate to the nucleotide precursor UDP-N-acetylmuramoyl-L-alanine (UMA). The chain is UDP-N-acetylmuramoylalanine--D-glutamate ligase from Vibrio cholerae serotype O1 (strain ATCC 39541 / Classical Ogawa 395 / O395).